We begin with the raw amino-acid sequence, 660 residues long: UvrABC system protein B (660 aa).

In terms of domain architecture, Helicase ATP-binding spans 27-414 (NGVNEGKRHQ…TDEMVQQIIR (388 aa)). 40-47 (GATGTGKT) is a binding site for ATP. Residues 93 to 116 (YYDYYQPEAYVPSTDTFIEKDASI) carry the Beta-hairpin motif. Residues 431 to 593 (QIDDLLGEIQ…ITPTTINKKI (163 aa)) enclose the Helicase C-terminal domain. The segment at 603–622 (NDETNEQQQTEVPKKMTKKE) is disordered. Residues 624–659 (EKTIANIEKEMKQAAKDLDFEKATELRDMLFELKAE) enclose the UVR domain.

The protein belongs to the UvrB family. As to quaternary structure, forms a heterotetramer with UvrA during the search for lesions. Interacts with UvrC in an incision complex.

It is found in the cytoplasm. Functionally, the UvrABC repair system catalyzes the recognition and processing of DNA lesions. A damage recognition complex composed of 2 UvrA and 2 UvrB subunits scans DNA for abnormalities. Upon binding of the UvrA(2)B(2) complex to a putative damaged site, the DNA wraps around one UvrB monomer. DNA wrap is dependent on ATP binding by UvrB and probably causes local melting of the DNA helix, facilitating insertion of UvrB beta-hairpin between the DNA strands. Then UvrB probes one DNA strand for the presence of a lesion. If a lesion is found the UvrA subunits dissociate and the UvrB-DNA preincision complex is formed. This complex is subsequently bound by UvrC and the second UvrB is released. If no lesion is found, the DNA wraps around the other UvrB subunit that will check the other stand for damage. This Staphylococcus saprophyticus subsp. saprophyticus (strain ATCC 15305 / DSM 20229 / NCIMB 8711 / NCTC 7292 / S-41) protein is UvrABC system protein B.